We begin with the raw amino-acid sequence, 377 residues long: Nitric oxide reductase FlRd-NAD(+) reductase (377 aa).

This sequence belongs to the FAD-dependent oxidoreductase family. FAD serves as cofactor.

The protein localises to the cytoplasm. The enzyme catalyses 2 reduced [nitric oxide reductase rubredoxin domain] + NAD(+) + H(+) = 2 oxidized [nitric oxide reductase rubredoxin domain] + NADH. It participates in nitrogen metabolism; nitric oxide reduction. Its function is as follows. One of at least two accessory proteins for anaerobic nitric oxide (NO) reductase. Reduces the rubredoxin moiety of NO reductase. This chain is Nitric oxide reductase FlRd-NAD(+) reductase, found in Salmonella newport (strain SL254).